The sequence spans 533 residues: GMP synthase [glutamine-hydrolyzing] (533 aa).

The Glutamine amidotransferase type-1 domain maps to 22–215; sequence RILILDFGSQ…THNVAGCSGT (194 aa). Catalysis depends on Cys-99, which acts as the Nucleophile. Residues His-189 and Glu-191 contribute to the active site. The 193-residue stretch at 216–408 folds into the GMPS ATP-PPase domain; that stretch reads WTMAGFRELE…LGIPESIVGR (193 aa). 243 to 249 is a binding site for ATP; it reads SGGVDSS.

In terms of assembly, homodimer.

It catalyses the reaction XMP + L-glutamine + ATP + H2O = GMP + L-glutamate + AMP + diphosphate + 2 H(+). Its pathway is purine metabolism; GMP biosynthesis; GMP from XMP (L-Gln route): step 1/1. Functionally, catalyzes the synthesis of GMP from XMP. In Gluconobacter oxydans (strain 621H) (Gluconobacter suboxydans), this protein is GMP synthase [glutamine-hydrolyzing].